The chain runs to 904 residues: Serine/arginine repetitive matrix protein 1 (904 aa).

Methionine 1 is modified (N-acetylmethionine). Residues 1–151 (MDAGFFRGTS…ASMKKQDEDK (151 aa)) form a necessary for DNA and RNA-binding region. A necessary for mRNA 3'-end cleavage and cytoplasmic accumulation region spans residues 1–156 (MDAGFFRGTS…QDEDKDKRDK (156 aa)). A Citrulline modification is found at arginine 7. One can recognise a PWI domain in the interval 27-126 (QLKFAECLEK…AGIPSAFLEL (100 aa)). Residue lysine 127 forms a Glycyl lysine isopeptide (Lys-Gly) (interchain with G-Cter in SUMO2) linkage. Residues 139-170 (EKLASMKKQDEDKDKRDKEEKESSREKRERSR) are compositionally biased toward basic and acidic residues. Residues 139–904 (EKLASMKKQD…MRKAQVSPQS (766 aa)) are disordered. At lysine 140 the chain carries N6-acetyllysine. Over residues 171 to 207 (SPRRRKSRSPSPRRRSSPVRRERKRSHSRSPRHRTKS) the composition is skewed to basic residues. Basic and acidic residues predominate over residues 214 to 234 (PEKKEKTPELPEPSVKVKEPS). Position 220 is a phosphothreonine (threonine 220). Phosphoserine is present on serine 227. A Glycyl lysine isopeptide (Lys-Gly) (interchain with G-Cter in SUMO1); alternate cross-link involves residue lysine 231. Lysine 231 participates in a covalent cross-link: Glycyl lysine isopeptide (Lys-Gly) (interchain with G-Cter in SUMO2); alternate. Serine 234 and serine 240 each carry phosphoserine. A Phosphothreonine modification is found at threonine 241. The span at 246–275 (KVPKPEPIPEPKEPSPEKNSKKEKEKEKTR) shows a compositional bias: basic and acidic residues. Lysine 249 participates in a covalent cross-link: Glycyl lysine isopeptide (Lys-Gly) (interchain with G-Cter in SUMO2). Serine 260 is subject to Phosphoserine. Basic residues-rich tracts occupy residues 276–329 (PRSR…RTPP) and 336–351 (PRHRRSRSPVRRRRRS). Residues 300–688 (RRHRSRSRSY…NKRHSPSPRP (389 aa)) form a necessary for speckles and matrix localization region. Residues 352 to 368 (SASLSGSSSSSSSSRSR) are compositionally biased toward low complexity. 4 positions are modified to phosphoserine: serine 389, serine 391, serine 393, and serine 402. Threonine 406 carries the post-translational modification Phosphothreonine. A Phosphoserine modification is found at serine 414. Position 416 is a phosphothreonine (threonine 416). 4 positions are modified to phosphoserine: serine 420, serine 429, serine 431, and serine 436. A compositionally biased stretch (polar residues) spans 428-438 (VSVSPGRTSGK). Residue lysine 447 forms a Glycyl lysine isopeptide (Lys-Gly) (interchain with G-Cter in SUMO2) linkage. Phosphoserine is present on residues serine 450 and serine 452. Lysine 459 participates in a covalent cross-link: Glycyl lysine isopeptide (Lys-Gly) (interchain with G-Cter in SUMO2). Phosphoserine occurs at positions 463 and 465. Residue lysine 472 forms a Glycyl lysine isopeptide (Lys-Gly) (interchain with G-Cter in SUMO2) linkage. Serine 478 carries the post-translational modification Phosphoserine. Residues 478–501 (SVQQRRQYRRQNQQSSSDSGSSSS) show a composition bias toward low complexity. Residues 503–518 (EDERPKRSHVKNGEVG) are compositionally biased toward basic and acidic residues. Phosphoserine occurs at positions 524, 526, 528, 530, 532, 549, and 551. The span at 533–560 (PRKRQKETSPRGRRRRSPSPPPTRRRRS) shows a compositional bias: basic residues. Threonine 555 bears the Phosphothreonine mark. 2 positions are modified to phosphoserine: serine 560 and serine 562. Positions 567–592 (PRRRRTPTPPPRRRTPSPPPRRRSPS) are enriched in basic residues. 3 positions are modified to phosphothreonine: threonine 572, threonine 574, and threonine 581. Serine 583 is subject to Phosphoserine. Positions 593–605 (PRRYSPPIQRRYS) are enriched in low complexity. At tyrosine 596 the chain carries Phosphotyrosine. Phosphoserine is present on residues serine 597, serine 605, and serine 607. Residue threonine 614 is modified to Phosphothreonine. Serine 616, serine 626, serine 628, serine 636, and serine 638 each carry phosphoserine. The span at 621-636 (PKRRASPSPPPKRRVS) shows a compositional bias: basic residues. Residues 649 to 663 (TKRRSPSLSSKHRKG) show a composition bias toward basic residues. Serine 694, serine 695, serine 696, serine 705, serine 707, serine 713, and serine 715 each carry phosphoserine. Composition is skewed to low complexity over residues 701–719 (RRGASSSPQRRQSPSPSTR) and 736–759 (AASPSPQSVRRVSSSRSVSGSPEP). A Phosphothreonine modification is found at threonine 718. A phosphoserine mark is found at serine 738, serine 740, serine 748, serine 752, serine 754, serine 756, serine 769, serine 773, serine 775, and serine 777. The segment covering 771 to 786 (VQSQSPSTNWSPAVPV) has biased composition (low complexity). Residue threonine 778 is modified to Phosphothreonine. Residues serine 781 and serine 791 each carry the phosphoserine modification. A Phosphothreonine modification is found at threonine 793. 3 positions are modified to phosphoserine: serine 795, serine 797, and serine 802. Residues 809–834 (KKKKKKKDKKHKKDKKHKKHKKHKKE) show a composition bias toward basic residues. Residues 837–866 (VAAAAAAAVTPAAIAAATTTLAQEEPVAAP) show a composition bias toward low complexity. A Glycyl lysine isopeptide (Lys-Gly) (interchain with G-Cter in SUMO2) cross-link involves residue lysine 869. Threonine 872 bears the Phosphothreonine mark. A Phosphoserine modification is found at serine 874. The segment covering 882 to 892 (DLEKHLREKAL) has biased composition (basic and acidic residues). Serine 901 bears the Phosphoserine mark.

Belongs to the splicing factor SR family. Identified in the spliceosome C complex. Found in a pre-mRNA splicing complex with SFRS4, SFRS5, SNRP70, SNRPA1, SRRM1 and SRRM2. Found in a pre-mRNA exonic splicing enhancer (ESE) complex with SNRP70, SNRPA1, SRRM1 and TRA2B/SFRS10. Component of the minor spliceosome, which splices U12-type introns. Found in a mRNA splicing-dependent exon junction complex (EJC) with DEK, PRPF8, NCBP1, RBM8A, RNPS1, SRRM1 and ALYREF/THOC4. Interacts with DDX39B, CPSF1, RBM8A, RNPS1, and ALYREF/THOC4. Seems to be a compound of RNA export complexes that are released from speckles in a ATP-dependent manner. In terms of processing, phosphorylated on multiple serine and threonine residues by DYRK3 during the G2-to-M transition, after the nuclear-envelope breakdown. Phosphorylation by DYRK3 promotes disassembly of nuclear speckles. Post-translationally, citrullinated by PADI4.

The protein localises to the nucleus matrix. The protein resides in the nucleus speckle. In terms of biological role, part of pre- and post-splicing multiprotein mRNP complexes. As a component of the minor spliceosome, involved in the splicing of U12-type introns in pre-mRNAs. Involved in numerous pre-mRNA processing events. Promotes constitutive and exonic splicing enhancer (ESE)-dependent splicing activation by bridging together sequence-specific (SR family proteins, SFRS4, SFRS5 and TRA2B/SFRS10) and basal snRNP (SNRP70 and SNRPA1) factors of the spliceosome. Stimulates mRNA 3'-end cleavage independently of the formation of an exon junction complex. Binds both pre-mRNA and spliced mRNA 20-25 nt upstream of exon-exon junctions. Binds RNA and DNA with low sequence specificity and has similar preference for either double- or single-stranded nucleic acid substrates. The chain is Serine/arginine repetitive matrix protein 1 (SRRM1) from Homo sapiens (Human).